The primary structure comprises 460 residues: Dynactin subunit 4 (460 aa).

Ala2 is subject to N-acetylalanine. A coiled-coil region spans residues 152–172 (QQLAQKEKVERDRKKLARRRN). Position 196 is a phosphoserine (Ser196). Lys215 participates in a covalent cross-link: Glycyl lysine isopeptide (Lys-Gly) (interchain with G-Cter in SUMO2). Thr407 carries the post-translational modification Phosphothreonine.

The protein belongs to the dynactin subunit 4 family. As to quaternary structure, subunit of dynactin, a multiprotein complex part of a tripartite complex with dynein and a adapter, such as BICDL1, BICD2 or HOOK3. The dynactin complex is built around ACTR1A/ACTB filament and consists of an actin-related filament composed of a shoulder domain, a pointed end and a barbed end. Its length is defined by its flexible shoulder domain. The soulder is composed of 2 DCTN1 subunits, 4 DCTN2 and 2 DCTN3. The 4 DCNT2 (via N-terminus) bind the ACTR1A filament and act as molecular rulers to determine the length. The pointed end is important for binding dynein-dynactin cargo adapters. Consists of 4 subunits: ACTR10, DCNT4, DCTN5 and DCTN6. The barbed end is composed of a CAPZA1:CAPZB heterodimers, which binds ACTR1A/ACTB filament and dynactin and stabilizes dynactin. Interacts with ATP7B, but not ATP7A, in a copper-dependent manner. Interacts with ANK2; this interaction is required for localization at costameres. Interacts with N4BP2L1.

The protein resides in the cytoplasm. Its subcellular location is the cytoskeleton. It is found in the microtubule organizing center. It localises to the centrosome. The protein localises to the stress fiber. The protein resides in the cell cortex. Its subcellular location is the myofibril. It is found in the sarcomere. Part of the dynactin complex that activates the molecular motor dynein for ultra-processive transport along microtubules. The sequence is that of Dynactin subunit 4 from Homo sapiens (Human).